The chain runs to 676 residues: F420-dependent formate dehydrogenase 2 subunit alpha (676 aa).

The region spanning 4–60 is the 4Fe-4S Mo/W bis-MGD-type domain; it reads FKVVHTICPYCGTGCGIDLVVKDGKVVDSHPFKRHPVNEGKVCIKGNYCYEFVHSED. [4Fe-4S] cluster contacts are provided by Cys11, Cys14, Cys18, and Cys46. A non-standard amino acid (selenocysteine) is located at residue Sec133.

It belongs to the prokaryotic molybdopterin-containing oxidoreductase family. In terms of assembly, dimer of an alpha (FdhA2) and a beta (FdhB2) subunit. Requires [4Fe-4S] cluster as cofactor. Mo-bis(molybdopterin guanine dinucleotide) is required as a cofactor. Zn(2+) serves as cofactor.

It carries out the reaction oxidized coenzyme F420-(gamma-L-Glu)(n) + formate + 2 H(+) = reduced coenzyme F420-(gamma-L-Glu)(n) + CO2. In terms of biological role, catalyzes the oxidation of formate to carbon dioxide, with coenzyme F420 as the electron acceptor. In vitro can also use methyl viologen as electron acceptor. This chain is F420-dependent formate dehydrogenase 2 subunit alpha, found in Methanococcus maripaludis (strain DSM 14266 / JCM 13030 / NBRC 101832 / S2 / LL).